A 314-amino-acid chain; its full sequence is Olfactory receptor 9A4 (314 aa).

Residues 1–24 (MLMNYSSATEFYLLGFPGSEELHH) are Extracellular-facing. Asparagine 4 carries N-linked (GlcNAc...) asparagine glycosylation. A helical membrane pass occupies residues 25 to 45 (ILFAIFFFFYLVTLMGNTVII). Over 46–53 (MIVCVDKR) the chain is Cytoplasmic. The helical transmembrane segment at 54–74 (LQSPMYFFLGHLSALEILVTT) threads the bilayer. Topologically, residues 75–99 (IIVPVMLWGLLLPGMQTIYLSACVV) are extracellular. Residues cysteine 97 and cysteine 189 are joined by a disulfide bond. Residues 100–120 (QLFLYLAVGTTEFALLGAMAV) traverse the membrane as a helical segment. Residues 121–139 (DRYVAVCNPLRYNIIMNRH) lie on the Cytoplasmic side of the membrane. Residues 140–160 (TCNFVVLVSWVFGFLFQIWPV) traverse the membrane as a helical segment. Residues 161–197 (YVMFQLTYCKSNVVNNFFCDRGQLLKLSCNNTLFTEF) are Extracellular-facing. An N-linked (GlcNAc...) asparagine glycan is attached at asparagine 190. The chain crosses the membrane as a helical span at residues 198–217 (ILFLMAVFVLFGSLIPTIVS). The Cytoplasmic segment spans residues 218-237 (NAYIISTILKIPSSSGRRKS). The chain crosses the membrane as a helical span at residues 238 to 258 (FSTCASHFTCVVIGYGSCLFL). Over 259-271 (YVKPKQTQAADYN) the chain is Extracellular. Residues 272–292 (WVVSLMVSVVTPFLNPFIFTL) traverse the membrane as a helical segment. Over 293–314 (RNDKVIEALRDGVKRCCQLFRN) the chain is Cytoplasmic.

It belongs to the G-protein coupled receptor 1 family.

The protein resides in the cell membrane. In terms of biological role, odorant receptor. The polypeptide is Olfactory receptor 9A4 (OR9A4) (Homo sapiens (Human)).